We begin with the raw amino-acid sequence, 211 residues long: tRNA (guanine-N(7)-)-methyltransferase (211 aa).

S-adenosyl-L-methionine-binding residues include Glu44, Asp69, Asp96, and Asp118. Residue Asp118 is part of the active site. Lys122 is a binding site for substrate. Positions 124 to 129 (RHEKRR) are interaction with RNA. Substrate-binding positions include Asp154 and 191-194 (TEYE).

Belongs to the class I-like SAM-binding methyltransferase superfamily. TrmB family.

The enzyme catalyses guanosine(46) in tRNA + S-adenosyl-L-methionine = N(7)-methylguanosine(46) in tRNA + S-adenosyl-L-homocysteine. The protein operates within tRNA modification; N(7)-methylguanine-tRNA biosynthesis. Catalyzes the formation of N(7)-methylguanine at position 46 (m7G46) in tRNA. This is tRNA (guanine-N(7)-)-methyltransferase from Streptococcus equi subsp. zooepidemicus (strain MGCS10565).